Here is a 171-residue protein sequence, read N- to C-terminus: uncharacterized protein (171 aa).

Functionally, required for production of the bacteriocin SkfA. This is an uncharacterized protein from Bacillus subtilis (strain 168).